The chain runs to 421 residues: Imidazolonepropionase (421 aa).

The Fe(3+) site is built by His-81 and His-83. His-81 and His-83 together coordinate Zn(2+). Residues Arg-90, Tyr-153, and His-186 each contribute to the 4-imidazolone-5-propanoate site. Tyr-153 serves as a coordination point for N-formimidoyl-L-glutamate. His-251 contributes to the Fe(3+) binding site. Residue His-251 participates in Zn(2+) binding. Residue Glu-254 coordinates 4-imidazolone-5-propanoate. Asp-326 is a binding site for Fe(3+). Residue Asp-326 coordinates Zn(2+). 2 residues coordinate N-formimidoyl-L-glutamate: Asn-328 and Gly-330. Residue Ser-331 coordinates 4-imidazolone-5-propanoate.

The protein belongs to the metallo-dependent hydrolases superfamily. HutI family. Zn(2+) is required as a cofactor. Requires Fe(3+) as cofactor.

The protein resides in the cytoplasm. The catalysed reaction is 4-imidazolone-5-propanoate + H2O = N-formimidoyl-L-glutamate. It participates in amino-acid degradation; L-histidine degradation into L-glutamate; N-formimidoyl-L-glutamate from L-histidine: step 3/3. Functionally, catalyzes the hydrolytic cleavage of the carbon-nitrogen bond in imidazolone-5-propanoate to yield N-formimidoyl-L-glutamate. It is the third step in the universal histidine degradation pathway. In Streptococcus pyogenes serotype M1, this protein is Imidazolonepropionase.